We begin with the raw amino-acid sequence, 72 residues long: Translation initiation factor IF-1 (72 aa).

One can recognise an S1-like domain in the interval 1–72 (MSKSDIIEMQ…TRGRITWRAK (72 aa)).

It belongs to the IF-1 family. Component of the 30S ribosomal translation pre-initiation complex which assembles on the 30S ribosome in the order IF-2 and IF-3, IF-1 and N-formylmethionyl-tRNA(fMet); mRNA recruitment can occur at any time during PIC assembly.

It is found in the cytoplasm. One of the essential components for the initiation of protein synthesis. Stabilizes the binding of IF-2 and IF-3 on the 30S subunit to which N-formylmethionyl-tRNA(fMet) subsequently binds. Helps modulate mRNA selection, yielding the 30S pre-initiation complex (PIC). Upon addition of the 50S ribosomal subunit IF-1, IF-2 and IF-3 are released leaving the mature 70S translation initiation complex. This Clostridium perfringens (strain 13 / Type A) protein is Translation initiation factor IF-1.